A 573-amino-acid polypeptide reads, in one-letter code: N(2)-(2-carboxyethyl)arginine synthase (573 aa).

Substrate is bound by residues tyrosine 271 and aspartate 301. 410 to 413 (IGFF) is a thiamine diphosphate binding site. 414–415 (RH) lines the substrate pocket. 436 to 438 (SSF) provides a ligand contact to thiamine diphosphate. Aspartate 463 lines the Mg(2+) pocket. Residues 464-465 (GG), 490-495 (NDTNGL), and tyrosine 561 each bind thiamine diphosphate. The Mg(2+) site is built by asparagine 490 and threonine 492. Leucine 571 is a substrate binding site.

As to quaternary structure, homotetramer; dimer of dimers. Mg(2+) serves as cofactor. Requires thiamine diphosphate as cofactor.

The enzyme catalyses D-glyceraldehyde 3-phosphate + L-arginine = N(2)-(2-carboxyethyl)-L-arginine + phosphate + H(+). Functionally, involved in the biosynthesis of the beta-lactamase inhibitor, clavulanic acid. Catalyzes the thiamine diphosphate (ThDP) dependent condensation of D-glyceraldehyde-3-phosphate (D-G3P) with L-arginine to yield the beta-amino acid, N2-(2-carboxyethyl)arginine (CEA) via a beta-elimination resulting in the formation of an enol which undergoes a second elimination to generate the alpha,beta-unsaturated acryloyl-ThDP. The chain is N(2)-(2-carboxyethyl)arginine synthase from Streptomyces clavuligerus.